The chain runs to 506 residues: Maturase K (506 aa).

Belongs to the intron maturase 2 family. MatK subfamily.

It is found in the plastid. The protein resides in the chloroplast. Functionally, usually encoded in the trnK tRNA gene intron. Probably assists in splicing its own and other chloroplast group II introns. The sequence is that of Maturase K from Rhododendron tsusiophyllum (Rhododendron).